The primary structure comprises 397 residues: MKEKVVLAYSGGLDTSIIIPWLKENYDLDVIAVCVNVGQGDDMDYVKTKAIKSGASKIYVEDVKEEFVVDYLYKAIKSEALYEQDYMLGTSFARPLMAKKLVEIAHKEQAKYICHGCTGKGNDQVRFEVGVKAQDPTIKIIAPWRIWDIKSREDAIDYAKKVGVEVPVTKKKIYSVDRNLWHVSHEGGDLEDLKNEHKEDMYFMVTPPEKAKDEPTYLEIYFEKGAPVKINGEFLNPVDIIDKLNTIGGENGIGIADIIENRLVGMKSRGIYETPAGTLLYAAHKKLESVTLDKYTYQYKKLVSAQYGELVYNGLWFTALREAIDAFVDKTQENVTGTVKLKLYKGNIKPCSVDTEYALYDEGISSFGESELYSHKDAEGFINLFGLPCKIKALKNF.

8–16 contributes to the ATP binding site; that stretch reads AYSGGLDTS. Residues Tyr86 and Ser91 each coordinate L-citrulline. Gly116 contacts ATP. The L-aspartate site is built by Thr118, Asn122, and Asp123. Residue Asn122 coordinates L-citrulline. 5 residues coordinate L-citrulline: Arg126, Ser175, Ser184, Glu260, and Tyr272.

This sequence belongs to the argininosuccinate synthase family. Type 1 subfamily. In terms of assembly, homotetramer.

The protein resides in the cytoplasm. It carries out the reaction L-citrulline + L-aspartate + ATP = 2-(N(omega)-L-arginino)succinate + AMP + diphosphate + H(+). It participates in amino-acid biosynthesis; L-arginine biosynthesis; L-arginine from L-ornithine and carbamoyl phosphate: step 2/3. This Clostridium botulinum (strain Okra / Type B1) protein is Argininosuccinate synthase.